The primary structure comprises 1697 residues: Neurexin-3a (1697 aa).

An N-terminal signal peptide occupies residues 1-23 (MNFFRFPVQLQLLISTVLGPCLG). Residues 24–198 (LEFTGLQGQW…RVRMDIEGIC (175 aa)) enclose the Laminin G-like 1 domain. Topologically, residues 24 to 1622 (LEFTGLQGQW…EVVRESSSTT (1599 aa)) are extracellular. The EGF-like 1 domain occupies 194 to 231 (IEGICMENPCENGGTCSVVDGEPLCDCSKTEYVGRFCN). 3 disulfide bridges follow: Cys-198-Cys-209, Cys-203-Cys-218, and Cys-220-Cys-230. 2 consecutive Laminin G-like domains span residues 258-455 (VATF…VFKC) and 462-654 (DPIS…KPSC). Residues Asp-304, Leu-321, and Met-389 each coordinate Ca(2+). 5 disulfides stabilise this stretch: Cys-419-Cys-455, Cys-625-Cys-654, Cys-662-Cys-673, Cys-667-Cys-682, and Cys-684-Cys-694. An EGF-like 2 domain is found at 658 to 695 (SGKQCDSYPCKNKGLCKEGWNRFICDCTGTGYWSRTCE). 2 consecutive Laminin G-like domains span residues 700–872 (ILSY…IDFC) and 886–1061 (DPVT…ERGC). 4 disulfide bridges follow: Cys-1033–Cys-1061, Cys-1077–Cys-1088, Cys-1082–Cys-1097, and Cys-1099–Cys-1109. The EGF-like 3 domain maps to 1073–1110 (PSTTCQEDSCANMGICIQQWENYTCDCSMTSYTGTHCN). In terms of domain architecture, Laminin G-like 6 spans 1114–1314 (TTYIFGKGGG…NPNIKINGSV (201 aa)). 3 disordered regions span residues 1345 to 1366 (TMST…TDDM), 1442 to 1479 (LSDG…NLPP), and 1520 to 1557 (PNKV…KMNH). Residues 1446–1461 (GSDDCGDDDDDDDDDG) are compositionally biased toward acidic residues. A compositionally biased stretch (polar residues) spans 1527–1547 (GRTTTASFSPKLSRSTTTSTP). A helical membrane pass occupies residues 1623 to 1643 (GMVVGIVAAAALCILILLYAM). At 1644 to 1697 (YKYRNRDEGSYQVDETRNYITNSAQSNGAVMKDKQQSTKSGNKKQKNKDKEYYV) the chain is on the cytoplasmic side. The segment at 1665-1697 (NSAQSNGAVMKDKQQSTKSGNKKQKNKDKEYYV) is disordered.

It belongs to the neurexin family.

The protein resides in the membrane. Its function is as follows. Neuronal cell surface protein that may be involved in cell recognition and cell adhesion. In Danio rerio (Zebrafish), this protein is Neurexin-3a (nrxn3a).